The primary structure comprises 711 residues: Polyribonucleotide nucleotidyltransferase (711 aa).

Residues Asp486 and Asp492 each contribute to the Mg(2+) site. The 60-residue stretch at Pro553–Ile612 folds into the KH domain. One can recognise an S1 motif domain in the interval Gly622–Lys690. A disordered region spans residues Ile689–Glu711. Residues Glu694–Glu711 show a composition bias toward low complexity.

This sequence belongs to the polyribonucleotide nucleotidyltransferase family. As to quaternary structure, component of the RNA degradosome, which is a multiprotein complex involved in RNA processing and mRNA degradation. Mg(2+) serves as cofactor.

The protein resides in the cytoplasm. The enzyme catalyses RNA(n+1) + phosphate = RNA(n) + a ribonucleoside 5'-diphosphate. Functionally, involved in mRNA degradation. Catalyzes the phosphorolysis of single-stranded polyribonucleotides processively in the 3'- to 5'-direction. This is Polyribonucleotide nucleotidyltransferase from Escherichia coli O6:K15:H31 (strain 536 / UPEC).